The chain runs to 884 residues: MKIHLLLAMIGTFVVIIGAQDQEGFISLDCGLPSDESPYDDSFNGLTFTSDSTFIQTGKIDSVDKDLNINLSKQYLTLRYFPEGKRNCYSLDVKRGTTYLIVVSFVYGNYDGLNRDPNFDIHLGPNKWKRIDLDGEKEGTREEIIHKARSNSLDICLVKTGETLPIISAIEIRPLRNNTYVTQSGSLMMSFRVYLSNSDASIRYADDVHDRIWSPFNGSSHTHITTDLNINNSNAYEIPKNILQTAAIPRNASAPLIITWDPLPINAEVYLYMHFAEIQTLEANETRQFDVILRGNFNHSGFSPTKLKVFTLYTEEPMKCGSEGCYLQLVKTPNSTLPPLINAIEAYSVIEFSQLETSLSDVDAIKNIKNTYKLNKITWQGDPCLPQDLSWESIRCTYVDGSTSPTIISLDLSKSGLNGSIPQILQNFTQLQELDLSNNSLTGPVPIFLANMKTLSLINLSGNNLSGSVPQALLDKEKEGLVLKLEGNPDLCKSSFCNTEKKNKFLLPVIASAASLVIVVVVVALFFVFRKKKASPSNLHAPPSMPVSNPGHNSQSESSFTSKKIRFTYSEVQEMTNNFDKALGEGGFGVVYHGFVNVIEQVAVKLLSQSSSQGYKHFKAEVELLMRVHHINLVSLVGYCDEGEHLALIYEYMPNGDLKQHLSGKHGGFVLSWESRLKIVLDAALGLEYLHTGCVPPMVHRDIKTTNILLDQHLQAKLADFGLSRSFPIGNEKNVSTVVAGTPGYLDPEYYQTNWLTEKSDIYSFGIVLLEIISNRPIIQQSREKPHIVEWVSFMITKGDLRSIMDPNLHQDYDIGSVWKAIELAMSCVSLSSARRPNMSRVVNELKECLISETSRIGEGRDMESKGSMEFSRDIYNEVIPQAR.

A signal peptide spans 1–19 (MKIHLLLAMIGTFVVIIGA). Residues 20–508 (QDQEGFISLD…TEKKNKFLLP (489 aa)) lie on the Extracellular side of the membrane. N-linked (GlcNAc...) asparagine glycans are attached at residues N70, N177, N217, N231, N251, N284, N298, N334, N418, N427, N438, N459, and N464. 3 LRR repeats span residues 404–427 (SPTI…ILQN), 428–451 (FTQL…FLAN), and 452–476 (MKTL…LLDK). The chain crosses the membrane as a helical span at residues 509-529 (VIASAASLVIVVVVVALFFVF). The Cytoplasmic portion of the chain corresponds to 530–884 (RKKKASPSNL…IYNEVIPQAR (355 aa)). The interval 535–559 (SPSNLHAPPSMPVSNPGHNSQSESS) is disordered. Polar residues predominate over residues 546–559 (PVSNPGHNSQSESS). Residue T568 is modified to Phosphothreonine. The Protein kinase domain occupies 577-850 (NNFDKALGEG…RVVNELKECL (274 aa)). ATP-binding positions include 583-591 (LGEGGFGVV) and K605. Y650 carries the phosphotyrosine modification. The Proton acceptor role is filled by D702. S736 carries the phosphoserine modification. Phosphothreonine occurs at positions 737 and 742. The residue at position 750 (Y750) is a Phosphotyrosine.

This sequence belongs to the protein kinase superfamily. Ser/Thr protein kinase family. Binds to the ammonium transporter AMT1-1.

It localises to the membrane. It catalyses the reaction L-seryl-[protein] + ATP = O-phospho-L-seryl-[protein] + ADP + H(+). The enzyme catalyses L-threonyl-[protein] + ATP = O-phospho-L-threonyl-[protein] + ADP + H(+). This Arabidopsis thaliana (Mouse-ear cress) protein is Probable leucine-rich repeat receptor-like protein kinase At2g28990.